Reading from the N-terminus, the 503-residue chain is Probable cytosol aminopeptidase (503 aa).

Residues lysine 270 and aspartate 275 each contribute to the Mn(2+) site. Residue lysine 282 is part of the active site. Residues aspartate 293, aspartate 352, and glutamate 354 each contribute to the Mn(2+) site. Arginine 356 is an active-site residue.

Belongs to the peptidase M17 family. Mn(2+) is required as a cofactor.

It localises to the cytoplasm. The catalysed reaction is Release of an N-terminal amino acid, Xaa-|-Yaa-, in which Xaa is preferably Leu, but may be other amino acids including Pro although not Arg or Lys, and Yaa may be Pro. Amino acid amides and methyl esters are also readily hydrolyzed, but rates on arylamides are exceedingly low.. It catalyses the reaction Release of an N-terminal amino acid, preferentially leucine, but not glutamic or aspartic acids.. Presumably involved in the processing and regular turnover of intracellular proteins. Catalyzes the removal of unsubstituted N-terminal amino acids from various peptides. This Shigella dysenteriae serotype 1 (strain Sd197) protein is Probable cytosol aminopeptidase.